Here is a 276-residue protein sequence, read N- to C-terminus: Ribosomal RNA large subunit methyltransferase E (276 aa).

5 residues coordinate S-adenosyl-L-methionine: glycine 52, phenylalanine 54, aspartate 72, aspartate 90, and aspartate 114. Lysine 154 serves as the catalytic Proton acceptor. Positions 203 to 249 (RAAPTANATPTPTSTSTSTPTSTSTPTSTSTSTPAPTLTQTQTQTPK) are enriched in low complexity. Residues 203–276 (RAAPTANATP…AKTGASRRTR (74 aa)) are disordered. Over residues 265 to 276 (AKAKTGASRRTR) the composition is skewed to basic residues.

This sequence belongs to the class I-like SAM-binding methyltransferase superfamily. RNA methyltransferase RlmE family.

It is found in the cytoplasm. It catalyses the reaction uridine(2552) in 23S rRNA + S-adenosyl-L-methionine = 2'-O-methyluridine(2552) in 23S rRNA + S-adenosyl-L-homocysteine + H(+). Its function is as follows. Specifically methylates the uridine in position 2552 of 23S rRNA at the 2'-O position of the ribose in the fully assembled 50S ribosomal subunit. This Anaeromyxobacter sp. (strain Fw109-5) protein is Ribosomal RNA large subunit methyltransferase E.